Here is a 455-residue protein sequence, read N- to C-terminus: MKRENIKTILLTVLVVISLVFTWGIWTFQPNFSEGSSSTESTVRVKHKIEKTTQKLSETVRPRDMFIHDDGAHYKVDDNALYEEIWSDLPHWDVKGIKDISDQYDKAGFKSWFYGIGGSEAKLDLQFSDTIPIDIFQTLFKWSNQSFEYSSFDHILIPFNETKANKKIYLVSYSKQLILEVTVESANYRNIMNDLKNRQSNMPAFSLFSIGSKKEFLLPNKPLTMDKKEFVTESIKTNTFKQALFSDPSIVREDSNYNNRNVLTDGISRLDVNLSQRQVQFQQRNLVQSTSYQTGELIKKSQKYLEDTGSWTDHYQFFNINDSQQLSFYIFMDQIPVINSTAKPFGATSAITVQWANDDILSYKRPNYSLGTNPIKTSETELMGGSEVKMLLSKQTAYDTDKIDQIFLAYQLVSTSTNDDPLVELEPVWAMKVNGKIVPITKDLLRKEGANSGVE.

Topologically, residues 1 to 7 (MKRENIK) are cytoplasmic. The helical transmembrane segment at 8–28 (TILLTVLVVISLVFTWGIWTF) threads the bilayer. At 29-455 (QPNFSEGSSS…RKEGANSGVE (427 aa)) the chain is on the extracellular side. Ca(2+)-binding residues include D69, D70, G115, G117, and S119.

In terms of assembly, homodimer. Interacts with WalK and YycI.

It localises to the cell membrane. Functionally, together with YycI, regulates the activity of the two-component system WalR/WalK. The chain is Two-component system WalR/WalK regulatory protein YycH (yycH) from Bacillus subtilis (strain 168).